The primary structure comprises 220 residues: MAKNKFNTSWLHDHINDPYVKMAQREGYRARAAYKLKEIDEQDKLIRPGQVIVDLGAAPGSWSQYVRNKLSQGKHRDAQREGGIDGTIIALDLLPMEPIADVHFIQGDFREDNVLAQLEEVVGDRDVDLVISDMAPNLSGVAVADAARIEHVCDLALEFAQNHLKPDGALLVKCFHGSGYSQIVEKFKHQFKTVAARKPKASRDKSSETFILGRHLKRPR.

Residues Gly-60, Trp-62, Asp-92, Asp-108, and Asp-133 each contribute to the S-adenosyl-L-methionine site. Residue Lys-173 is the Proton acceptor of the active site.

This sequence belongs to the class I-like SAM-binding methyltransferase superfamily. RNA methyltransferase RlmE family.

It localises to the cytoplasm. The catalysed reaction is uridine(2552) in 23S rRNA + S-adenosyl-L-methionine = 2'-O-methyluridine(2552) in 23S rRNA + S-adenosyl-L-homocysteine + H(+). Specifically methylates the uridine in position 2552 of 23S rRNA at the 2'-O position of the ribose in the fully assembled 50S ribosomal subunit. The polypeptide is Ribosomal RNA large subunit methyltransferase E (Paraburkholderia phymatum (strain DSM 17167 / CIP 108236 / LMG 21445 / STM815) (Burkholderia phymatum)).